The primary structure comprises 422 residues: Bifunctional enzyme IspD/IspF (422 aa).

Positions 1 to 267 are 2-C-methyl-D-erythritol 4-phosphate cytidylyltransferase; it reads MAVGLLLLAA…PISALSMPLP (267 aa). Positions 268–422 are 2-C-methyl-D-erythritol 2,4-cyclodiphosphate synthase; sequence LIGVGIDFHK…AIAVAQIYHR (155 aa). Positions 274 and 276 each coordinate a divalent metal cation. Residues 274–276 and 301–302 contribute to the 4-CDP-2-C-methyl-D-erythritol 2-phosphate site; these read DFH and HS. His309 contacts a divalent metal cation. 4-CDP-2-C-methyl-D-erythritol 2-phosphate contacts are provided by residues 323 to 325, Phe404, and Arg407; that span reads DIG.

In the N-terminal section; belongs to the IspD/TarI cytidylyltransferase family. IspD subfamily. It in the C-terminal section; belongs to the IspF family. A divalent metal cation serves as cofactor.

It catalyses the reaction 2-C-methyl-D-erythritol 4-phosphate + CTP + H(+) = 4-CDP-2-C-methyl-D-erythritol + diphosphate. The enzyme catalyses 4-CDP-2-C-methyl-D-erythritol 2-phosphate = 2-C-methyl-D-erythritol 2,4-cyclic diphosphate + CMP. The protein operates within isoprenoid biosynthesis; isopentenyl diphosphate biosynthesis via DXP pathway; isopentenyl diphosphate from 1-deoxy-D-xylulose 5-phosphate: step 2/6. It participates in isoprenoid biosynthesis; isopentenyl diphosphate biosynthesis via DXP pathway; isopentenyl diphosphate from 1-deoxy-D-xylulose 5-phosphate: step 4/6. In terms of biological role, bifunctional enzyme that catalyzes the formation of 4-diphosphocytidyl-2-C-methyl-D-erythritol from CTP and 2-C-methyl-D-erythritol 4-phosphate (MEP) (IspD), and catalyzes the conversion of 4-diphosphocytidyl-2-C-methyl-D-erythritol 2-phosphate (CDP-ME2P) to 2-C-methyl-D-erythritol 2,4-cyclodiphosphate (ME-CPP) with a corresponding release of cytidine 5-monophosphate (CMP) (IspF). The protein is Bifunctional enzyme IspD/IspF of Tropheryma whipplei (strain TW08/27) (Whipple's bacillus).